The primary structure comprises 382 residues: Galactokinase (382 aa).

Residue 34–37 participates in substrate binding; it reads EHTD. 124–130 is a binding site for ATP; the sequence is GAGLSSS. Mg(2+)-binding residues include serine 130 and glutamate 162. Residue aspartate 174 is the Proton acceptor of the active site. Residue tyrosine 223 participates in substrate binding.

It belongs to the GHMP kinase family. GalK subfamily.

Its subcellular location is the cytoplasm. The catalysed reaction is alpha-D-galactose + ATP = alpha-D-galactose 1-phosphate + ADP + H(+). Its pathway is carbohydrate metabolism; galactose metabolism. Functionally, catalyzes the transfer of the gamma-phosphate of ATP to D-galactose to form alpha-D-galactose-1-phosphate (Gal-1-P). The chain is Galactokinase from Escherichia coli O1:K1 / APEC.